The chain runs to 271 residues: Protein phosphatase 1 regulatory subunit 3B-B (271 aa).

The PP1-binding motif signature appears at arginine 56–phenylalanine 59. The 109-residue stretch at arginine 119 to valine 227 folds into the CBM21 domain.

In terms of assembly, interacts with glycogen, PPP1CC catalytic subunit of PP1 and PYGL. Associates with glycogen particles. Forms complexes with debranching enzyme, glycogen phosphorylase, glycogen synthase and phosphorylase kinase which is necessary for its regulation of PP1 activity.

Functionally, acts as a glycogen-targeting subunit for phosphatase PP1. Facilitates interaction of the PP1 with enzymes of the glycogen metabolism and regulates its activity. Suppresses the rate at which PP1 dephosphorylates (inactivates) glycogen phosphorylase and enhances the rate at which it activates glycogen synthase and therefore limits glycogen breakdown. This chain is Protein phosphatase 1 regulatory subunit 3B-B (ppp1r3b-b), found in Xenopus laevis (African clawed frog).